The following is a 662-amino-acid chain: Intracellular exo-alpha-(1-&gt;5)-L-arabinofuranosidase (662 aa).

3 residues coordinate alpha-L-arabinofuranose: glutamate 27, asparagine 72, and asparagine 174. Catalysis depends on glutamate 175, which acts as the Proton donor/acceptor. Residues tyrosine 246, glutamate 294, and glutamine 352 each contribute to the alpha-L-arabinofuranose site. Glutamate 294 serves as the catalytic Nucleophile. Disordered stretches follow at residues 454-483, 497-548, and 588-662; these read LADA…SLRD, SIRC…RTAR, and WTRW…ARRC. A compositionally biased stretch (low complexity) spans 519–533; sequence TGTPPAAPPSSSSAP. Over residues 537 to 547 the composition is skewed to basic and acidic residues; sequence PTARRSPDRTA. Composition is skewed to low complexity over residues 590–603, 628–641, and 649–662; these read RWAP…PSRR, RRSP…TPAP, and AGAS…ARRC.

Belongs to the glycosyl hydrolase 51 family. As to quaternary structure, homohexamer; trimer of dimers.

It localises to the cytoplasm. It catalyses the reaction Hydrolysis of terminal non-reducing alpha-L-arabinofuranoside residues in alpha-L-arabinosides.. Its pathway is glycan metabolism; L-arabinan degradation. Functionally, involved in the degradation of arabinan and is a key enzyme in the complete degradation of the plant cell wall. Catalyzes the cleavage of terminal alpha-(1-&gt;5)-arabinofuranosyl bonds in different hemicellulosic homopolysaccharides (arabino-oligoxylosides, branched and debranched arabinans). It acts rapidly on the short-chain arabino-oligoxylosides from digestion of xylan with xylanases. It hydrolyzes slowly arabinan and arabinoxylan from wheat and rye flour. In Streptomyces lividans, this protein is Intracellular exo-alpha-(1-&gt;5)-L-arabinofuranosidase.